The following is a 302-amino-acid chain: Quinolinate synthase (302 aa).

Iminosuccinate contacts are provided by H24 and S41. C86 provides a ligand contact to [4Fe-4S] cluster. Iminosuccinate-binding positions include 112 to 114 (YVN) and S129. A [4Fe-4S] cluster-binding site is contributed by C171. Residues 197-199 (HPE) and T214 each bind iminosuccinate. C259 is a [4Fe-4S] cluster binding site.

It belongs to the quinolinate synthase family. Type 2 subfamily. Requires [4Fe-4S] cluster as cofactor.

It is found in the cytoplasm. It catalyses the reaction iminosuccinate + dihydroxyacetone phosphate = quinolinate + phosphate + 2 H2O + H(+). It functions in the pathway cofactor biosynthesis; NAD(+) biosynthesis; quinolinate from iminoaspartate: step 1/1. Catalyzes the condensation of iminoaspartate with dihydroxyacetone phosphate to form quinolinate. The protein is Quinolinate synthase of Dehalococcoides mccartyi (strain ATCC BAA-2266 / KCTC 15142 / 195) (Dehalococcoides ethenogenes (strain 195)).